Consider the following 850-residue polypeptide: Ras GTPase-activating protein 2 (850 aa).

Residues Met-1–Pro-24 are compositionally biased toward low complexity. The disordered stretch occupies residues Met-1–Arg-32. Ala-2 carries the N-acetylalanine modification. 2 C2 domains span residues Ala-20–Phe-138 and Val-149–Tyr-289. A Ras-GAP domain is found at Asp-372–Ile-589. Ser-555 bears the Phosphoserine mark. Positions Val-604–Arg-706 constitute a PH domain. The segment at Asn-708–Gly-744 adopts a Btk-type zinc-finger fold. Residues His-716, Cys-727, Cys-728, and Cys-738 each contribute to the Zn(2+) site. Positions His-825–Ser-850 are disordered.

Its subcellular location is the cytoplasm. It localises to the perinuclear region. Functionally, inhibitory regulator of the Ras-cyclic AMP pathway. Binds inositol tetrakisphosphate (IP4). The chain is Ras GTPase-activating protein 2 (RASA2) from Homo sapiens (Human).